The sequence spans 958 residues: Atromentin synthetase greA (958 aa).

The interval 60–465 (SIQTKTFSAF…SGRIKDTVIV (406 aa)) is adenylation (A) domain. A Carrier domain is found at 597–675 (APSTETEKAL…SLANYVNALL (79 aa)). Residues 602 to 672 (TEKALAKIYA…VVSSLANYVN (71 aa)) are thiolation and peptide carrier (T) domain. Position 634 is an O-(pantetheine 4'-phosphoryl)serine (Ser634). Residues 698 to 946 (PIFFVHPGVG…MDFDHVPQFQ (249 aa)) are thioesterase (TE) domain.

The protein belongs to the ATP-dependent AMP-binding enzyme family.

Its pathway is secondary metabolite biosynthesis. An L-tyrosine:2-oxoglutarate aminotransferase and atromentin synthetase greA catalyze consecutive steps to turn over L-tyrosine into atromentin, which represents the generic precursor molecule for the entire terphenylquinone and pulvinic acid family of pigments, which are widely distributed secondary metabolites in homobasidiomycetes. The first step catalyzed by the aminotransferase converts L-tyrosine in to 4-hydroxyphenylpyruvate (4-HPP). Adenylation of two 4-HPP monomers by the greA adenylation (A) domain, covalent tethering of the monomers as a thioester and oxoester onto the greA thiolation (T) and thioesterase (TE) domains, respectively, and symmetric C-C-bond formation between two monomers catalyzed by the greA TE domain leads to atromentin. The polypeptide is Atromentin synthetase greA (greA) (Suillus grevillei (Larch bolete)).